Reading from the N-terminus, the 83-residue chain is Small ribosomal subunit protein eS21 (83 aa).

This sequence belongs to the eukaryotic ribosomal protein eS21 family. In terms of assembly, component of the 40S small ribosomal subunit. Interacts with sta.

It is found in the cytoplasm. The protein localises to the cytosol. It localises to the rough endoplasmic reticulum. May be an associated component of the ribosome rather than a core structural subunit. May act as a translation initiation factor. Has a role in regulation of cell proliferation in the hematopoietic organs and the imaginal disks of larva. This chain is Small ribosomal subunit protein eS21 (RpS21), found in Drosophila erecta (Fruit fly).